A 427-amino-acid chain; its full sequence is Trigger factor (427 aa).

Residues 163-248 (GDTVVIDFVG…VNEVKAKELP (86 aa)) form the PPIase FKBP-type domain.

The protein belongs to the FKBP-type PPIase family. Tig subfamily.

It is found in the cytoplasm. The catalysed reaction is [protein]-peptidylproline (omega=180) = [protein]-peptidylproline (omega=0). Its function is as follows. Involved in protein export. Acts as a chaperone by maintaining the newly synthesized protein in an open conformation. Functions as a peptidyl-prolyl cis-trans isomerase. This is Trigger factor from Lactococcus lactis subsp. cremoris (strain SK11).